A 731-amino-acid chain; its full sequence is MSVAHVALPVPLPRTFDYLLPEGMAVKAGCRVRVPFGKQERIGIVAAVSERSELPLDELKPVAEALDDEPVFSTTVWRLLMWAAEYYHHPIGDVLFHALPVMLRQGKPASATPLWYWFATEQGQVVDLNGLKRSRKQQQALAALRQGKIWRHQVGELEFNEAALQALRGKGLAELACEAPALTDWRSAYSVAGERLRLNTEQATAVGAIHSAADRFSAWLLAGITGSGKTEVYLSVLENVLAQGRQALVMVPEIGLTPQTIARFRQRFNAPVEVLHSGLNDSERLSAWLKAKNGEAAIVIGTRSSLFTPFKDLGVIVIDEEHDSSYKQQEGWRYHARDLAVWRAHSEQIPIILGSATPALETLHNVRQGKYRQLTLSKRAGNARPAQQHVLDLKGQPLQAGLSPALISRMRQHLQADNQVILFLNRRGFAPALLCHDCGWIAECPRCDSYYTLHQAQHHLRCHHCDSQRPIPRQCPSCGSTHLVPVGIGTEQLEQALAPLFPEVPISRIDRDTTSRKGALEEHLAAVHRGGARILIGTQMLAKGHHFPDVTLVSLLDVDGALFSADFRSAERFAQLYTQVSGRAGRAGKQGEVILQTHHPEHPLLQTLLYKGYDAFAEQALAERQTMQLPPWTSHVLIRAEDHNNQQAPLFLQQLRNLLQASPLADEKLWVLGPVPALAPKRGGRWRWQILLQHPSRVRLQHIVSGTLALINTLPEARKVKWVLDVDPIEG.

Positions 1–98 are 3'BD; the sequence is MSVAHVALPV…HPIGDVLFHA (98 aa). A WH region spans residues 115–177; sequence WYWFATEQGQ…RGKGLAELAC (63 aa). Residues 200–375 are helicase lobe 1; it reads TEQATAVGAI…VRQGKYRQLT (176 aa). Residues 210–376 enclose the Helicase ATP-binding domain; sequence HSAADRFSAW…RQGKYRQLTL (167 aa). 223–230 contributes to the ATP binding site; sequence GITGSGKT. 6 residues coordinate ADP: G226, G228, K229, T230, E231, and R263. The DEAH box motif lies at 319–322; that stretch reads DEEH. The Aromatic-rich loop (ARL) signature appears at 326-340; that stretch reads YKQQEGWRYHARDLA. The helicase lobe 2, N-terminus stretch occupies residues 387–430; it reads QQHVLDLKGQPLQAGLSPALISRMRQHLQADNQVILFLNRRGFA. Positions 431 to 485 are CRR; sequence PALLCHDCGWIAECPRCDSYYTLHQAQHHLRCHHCDSQRPIPRQCPSCGSTHLVP. Residues C435, C438, C444, C447, C462, C465, C475, and C478 each contribute to the Zn(2+) site. The Helicase C-terminal domain maps to 470-637; the sequence is PIPRQCPSCG…QLPPWTSHVL (168 aa). Positions 486–626 are helicase lobe 2, C-terminus; that stretch reads VGIGTEQLEQ…AEQALAERQT (141 aa). Residue K543 participates in ADP binding. The segment at 633 to 731 is CTD; the sequence is TSHVLIRAED…WVLDVDPIEG (99 aa).

Belongs to the helicase family. PriA subfamily. In terms of assembly, binds SSB. Component of the replication restart primosome. Requires Zn(2+) as cofactor.

The enzyme catalyses Couples ATP hydrolysis with the unwinding of duplex DNA by translocating in the 3'-5' direction.. It carries out the reaction ATP + H2O = ADP + phosphate + H(+). With respect to regulation, ATPase activity is stimulated by single-stranded binding protein (SSB). Initiates the restart of stalled replication forks, which reloads the replicative helicase on sites other than the origin of replication. Recognizes and binds to abandoned replication forks and remodels them to uncover a helicase loading site. Promotes assembly of the primosome at these replication forks. Functionally, recognizes abandoned replication forks and remodels SSB on ssDNA to uncover a loading site for DnaB. Binds replication fork DNA, has DNA-dependent ATPase activity in the presence of replication fork DNA, restores normal cell growth and SOS induction to E.coli mutant pirA304. This Klebsiella pneumoniae subsp. pneumoniae (strain ATCC 700721 / MGH 78578) protein is Replication restart protein PriA.